The following is a 177-amino-acid chain: ATP synthase subunit delta (177 aa).

This sequence belongs to the ATPase delta chain family. As to quaternary structure, F-type ATPases have 2 components, F(1) - the catalytic core - and F(0) - the membrane proton channel. F(1) has five subunits: alpha(3), beta(3), gamma(1), delta(1), epsilon(1). F(0) has three main subunits: a(1), b(2) and c(10-14). The alpha and beta chains form an alternating ring which encloses part of the gamma chain. F(1) is attached to F(0) by a central stalk formed by the gamma and epsilon chains, while a peripheral stalk is formed by the delta and b chains.

The protein localises to the cell inner membrane. Functionally, f(1)F(0) ATP synthase produces ATP from ADP in the presence of a proton or sodium gradient. F-type ATPases consist of two structural domains, F(1) containing the extramembraneous catalytic core and F(0) containing the membrane proton channel, linked together by a central stalk and a peripheral stalk. During catalysis, ATP synthesis in the catalytic domain of F(1) is coupled via a rotary mechanism of the central stalk subunits to proton translocation. In terms of biological role, this protein is part of the stalk that links CF(0) to CF(1). It either transmits conformational changes from CF(0) to CF(1) or is implicated in proton conduction. The polypeptide is ATP synthase subunit delta (Salmonella agona (strain SL483)).